Consider the following 206-residue polypeptide: Large ribosomal subunit protein uL4 (206 aa).

The protein belongs to the universal ribosomal protein uL4 family. In terms of assembly, part of the 50S ribosomal subunit.

In terms of biological role, one of the primary rRNA binding proteins, this protein initially binds near the 5'-end of the 23S rRNA. It is important during the early stages of 50S assembly. It makes multiple contacts with different domains of the 23S rRNA in the assembled 50S subunit and ribosome. Forms part of the polypeptide exit tunnel. This Rhodopseudomonas palustris (strain BisB18) protein is Large ribosomal subunit protein uL4.